The following is a 216-amino-acid chain: MASLKSLLSGFLLLAGAAQALKFDLEATSSHHSNQRRCIRNFVNKDTLVVVTATLDGYKGDGMNVNMHISDSHGNEYGKAKDIAGEQRIVFTSHHDAAFDVCFENYLTGSKYVENPRRHVELDIDIGADAKDWSAIQATEKLKPLETDLRRIEELVGEVVNEMDYLRAREQKLRDTNESTNNRVKWFGMATTFLLIALWGWQIMYLRAYFRSKHLI.

Residues 1–20 form the signal peptide; it reads MASLKSLLSGFLLLAGAAQA. Topologically, residues 21-185 are lumenal; sequence LKFDLEATSS…TNESTNNRVK (165 aa). The 91-residue stretch at 36-126 folds into the GOLD domain; it reads RRCIRNFVNK…RRHVELDIDI (91 aa). Residues 186–206 traverse the membrane as a helical segment; that stretch reads WFGMATTFLLIALWGWQIMYL. At 207–216 the chain is on the cytoplasmic side; the sequence is RAYFRSKHLI.

Belongs to the EMP24/GP25L family.

The protein localises to the endoplasmic reticulum membrane. It is found in the golgi apparatus membrane. Its function is as follows. Constituent of COPII-coated endoplasmic reticulum-derived transport vesicles. Required for efficient transport of a subset of secretory proteins to the Golgi. Facilitates retrograde transport from the Golgi to the endoplasmic reticulum. The polypeptide is Endoplasmic reticulum vesicle protein 25 (erv-1) (Neurospora crassa (strain ATCC 24698 / 74-OR23-1A / CBS 708.71 / DSM 1257 / FGSC 987)).